The primary structure comprises 236 residues: uncharacterized protein (236 aa).

Positions 4–236 (QFLIAYRGYS…VKFQITAQIY (233 aa)) constitute a GP-PDE domain.

The protein to glycerophosphoryl diester phosphodiesterases (EC 3.1.4.46). This sequence to M.genitalium MG293.

This is an uncharacterized protein from Mycoplasma genitalium (strain ATCC 33530 / DSM 19775 / NCTC 10195 / G37) (Mycoplasmoides genitalium).